The primary structure comprises 509 residues: ATP synthase subunit alpha (509 aa).

Position 169-176 (169-176) interacts with ATP; the sequence is GDRQTGKT.

Belongs to the ATPase alpha/beta chains family. F-type ATPases have 2 components, CF(1) - the catalytic core - and CF(0) - the membrane proton channel. CF(1) has five subunits: alpha(3), beta(3), gamma(1), delta(1), epsilon(1). CF(0) has three main subunits: a(1), b(2) and c(9-12). The alpha and beta chains form an alternating ring which encloses part of the gamma chain. CF(1) is attached to CF(0) by a central stalk formed by the gamma and epsilon chains, while a peripheral stalk is formed by the delta and b chains.

Its subcellular location is the cell inner membrane. The enzyme catalyses ATP + H2O + 4 H(+)(in) = ADP + phosphate + 5 H(+)(out). Its function is as follows. Produces ATP from ADP in the presence of a proton gradient across the membrane. The alpha chain is a regulatory subunit. This chain is ATP synthase subunit alpha, found in Brucella anthropi (strain ATCC 49188 / DSM 6882 / CCUG 24695 / JCM 21032 / LMG 3331 / NBRC 15819 / NCTC 12168 / Alc 37) (Ochrobactrum anthropi).